A 386-amino-acid polypeptide reads, in one-letter code: Succinate--CoA ligase [ADP-forming] subunit beta (386 aa).

One can recognise an ATP-grasp domain in the interval 9–244 (KEILRNFGVP…LDEEDPAEVE (236 aa)). Residues lysine 46, 53–55 (GRG), glutamate 99, alanine 102, and glutamate 107 contribute to the ATP site. Positions 199 and 213 each coordinate Mg(2+). Residues asparagine 264 and 321-323 (GIM) each bind substrate.

Belongs to the succinate/malate CoA ligase beta subunit family. Heterotetramer of two alpha and two beta subunits. Requires Mg(2+) as cofactor.

It catalyses the reaction succinate + ATP + CoA = succinyl-CoA + ADP + phosphate. The catalysed reaction is GTP + succinate + CoA = succinyl-CoA + GDP + phosphate. Its pathway is carbohydrate metabolism; tricarboxylic acid cycle; succinate from succinyl-CoA (ligase route): step 1/1. Its function is as follows. Succinyl-CoA synthetase functions in the citric acid cycle (TCA), coupling the hydrolysis of succinyl-CoA to the synthesis of either ATP or GTP and thus represents the only step of substrate-level phosphorylation in the TCA. The beta subunit provides nucleotide specificity of the enzyme and binds the substrate succinate, while the binding sites for coenzyme A and phosphate are found in the alpha subunit. This Polaromonas sp. (strain JS666 / ATCC BAA-500) protein is Succinate--CoA ligase [ADP-forming] subunit beta.